Consider the following 912-residue polypeptide: Transcription factor bHLH140 (912 aa).

Residues 1 to 57 (MDDFNLRSENPNSSSTTSSSSSSFHRHKSETGNTKRSRSTSTLSTDPQSVAARDRRH) are disordered. The segment covering 13 to 23 (SSSTTSSSSSS) has biased composition (low complexity). The region spanning 43–92 (LSTDPQSVAARDRRHRISDRFKILQSMVPGGAKMDTVSMLDEAISYVKFL) is the bHLH domain. An ATP-binding site is contributed by 234-241 (GPPGSGKS). A Macro domain is found at 511 to 690 (KAKASQKNID…KYKGSQDKAV (180 aa)). Over residues 657–666 (PKRSSQTAVS) the composition is skewed to polar residues. The tract at residues 657–706 (PKRSSQTAVSDSGEDIKEDSERNKKYKGSQDKAVTNNLESESLEDTRGSG) is disordered. In terms of domain architecture, HIT spans 720–829 (LHSIAMHPER…SQDFNSDSLK (110 aa)). A C2H2-type zinc finger spans residues 870 to 893 (LRCNRCRSAHPNIPKLKSHVRSCH).

Homodimer.

It is found in the nucleus. In Arabidopsis thaliana (Mouse-ear cress), this protein is Transcription factor bHLH140 (BHLH140).